A 267-amino-acid chain; its full sequence is 4-hydroxy-tetrahydrodipicolinate reductase (267 aa).

Residues 8 to 13 (GAAGRM) and D34 each bind NAD(+). R35 contributes to the NADP(+) binding site. NAD(+) is bound by residues 98–100 (GTT) and 122–125 (AANF). H155 (proton donor/acceptor) is an active-site residue. H156 contacts (S)-2,3,4,5-tetrahydrodipicolinate. K159 acts as the Proton donor in catalysis. Residue 165–166 (GT) coordinates (S)-2,3,4,5-tetrahydrodipicolinate.

Belongs to the DapB family.

The protein localises to the cytoplasm. The enzyme catalyses (S)-2,3,4,5-tetrahydrodipicolinate + NAD(+) + H2O = (2S,4S)-4-hydroxy-2,3,4,5-tetrahydrodipicolinate + NADH + H(+). It carries out the reaction (S)-2,3,4,5-tetrahydrodipicolinate + NADP(+) + H2O = (2S,4S)-4-hydroxy-2,3,4,5-tetrahydrodipicolinate + NADPH + H(+). The protein operates within amino-acid biosynthesis; L-lysine biosynthesis via DAP pathway; (S)-tetrahydrodipicolinate from L-aspartate: step 4/4. In terms of biological role, catalyzes the conversion of 4-hydroxy-tetrahydrodipicolinate (HTPA) to tetrahydrodipicolinate. The polypeptide is 4-hydroxy-tetrahydrodipicolinate reductase (Pseudomonas putida (strain ATCC 47054 / DSM 6125 / CFBP 8728 / NCIMB 11950 / KT2440)).